The primary structure comprises 112 residues: Urease subunit gamma (112 aa).

The protein belongs to the urease gamma subunit family. Heterotrimer of UreA (gamma), UreB (beta) and UreC (alpha) subunits. Three heterotrimers associate to form the active enzyme.

The protein localises to the cytoplasm. The enzyme catalyses urea + 2 H2O + H(+) = hydrogencarbonate + 2 NH4(+). Its pathway is nitrogen metabolism; urea degradation; CO(2) and NH(3) from urea (urease route): step 1/1. The protein is Urease subunit gamma of Gloeothece citriformis (strain PCC 7424) (Cyanothece sp. (strain PCC 7424)).